Reading from the N-terminus, the 211-residue chain is tRNA (guanine-N(7)-)-methyltransferase (211 aa).

S-adenosyl-L-methionine is bound by residues E44, D69, D96, and D118. D118 is an active-site residue. Residue K122 coordinates substrate. An interaction with RNA region spans residues 124–129 (KHEKRR). Residues D154 and 191-194 (TEYE) each bind substrate.

It belongs to the class I-like SAM-binding methyltransferase superfamily. TrmB family.

The enzyme catalyses guanosine(46) in tRNA + S-adenosyl-L-methionine = N(7)-methylguanosine(46) in tRNA + S-adenosyl-L-homocysteine. The protein operates within tRNA modification; N(7)-methylguanine-tRNA biosynthesis. Functionally, catalyzes the formation of N(7)-methylguanine at position 46 (m7G46) in tRNA. The chain is tRNA (guanine-N(7)-)-methyltransferase from Streptococcus pyogenes serotype M6 (strain ATCC BAA-946 / MGAS10394).